The following is a 150-amino-acid chain: 6,7-dimethyl-8-ribityllumazine synthase (150 aa).

Residues F11, 42 to 44 (IFE), and 73 to 75 (CAI) contribute to the 5-amino-6-(D-ribitylamino)uracil site. 78–79 (ES) contributes to the (2S)-2-hydroxy-3-oxobutyl phosphate binding site. H81 (proton donor) is an active-site residue. N106 is a 5-amino-6-(D-ribitylamino)uracil binding site. Residue R120 participates in (2S)-2-hydroxy-3-oxobutyl phosphate binding.

It belongs to the DMRL synthase family.

It catalyses the reaction (2S)-2-hydroxy-3-oxobutyl phosphate + 5-amino-6-(D-ribitylamino)uracil = 6,7-dimethyl-8-(1-D-ribityl)lumazine + phosphate + 2 H2O + H(+). It functions in the pathway cofactor biosynthesis; riboflavin biosynthesis; riboflavin from 2-hydroxy-3-oxobutyl phosphate and 5-amino-6-(D-ribitylamino)uracil: step 1/2. In terms of biological role, catalyzes the formation of 6,7-dimethyl-8-ribityllumazine by condensation of 5-amino-6-(D-ribitylamino)uracil with 3,4-dihydroxy-2-butanone 4-phosphate. This is the penultimate step in the biosynthesis of riboflavin. This Paramagnetospirillum magneticum (strain ATCC 700264 / AMB-1) (Magnetospirillum magneticum) protein is 6,7-dimethyl-8-ribityllumazine synthase.